Consider the following 326-residue polypeptide: Fructose-1,6-bisphosphatase class 1 (326 aa).

It belongs to the FBPase class 1 family. As to quaternary structure, homotetramer.

It localises to the cytoplasm. It catalyses the reaction beta-D-fructose 1,6-bisphosphate + H2O = beta-D-fructose 6-phosphate + phosphate. It functions in the pathway carbohydrate biosynthesis; gluconeogenesis. The chain is Fructose-1,6-bisphosphatase class 1 from Methylobacterium sp. (strain 4-46).